The sequence spans 376 residues: N-acetyldiaminopimelate deacetylase (376 aa).

D69 is a catalytic residue. The Proton acceptor role is filled by E128.

It belongs to the peptidase M20A family. N-acetyldiaminopimelate deacetylase subfamily.

It catalyses the reaction N-acetyl-(2S,6S)-2,6-diaminopimelate + H2O = (2S,6S)-2,6-diaminopimelate + acetate. The protein operates within amino-acid biosynthesis; L-lysine biosynthesis via DAP pathway; LL-2,6-diaminopimelate from (S)-tetrahydrodipicolinate (acetylase route): step 3/3. Catalyzes the conversion of N-acetyl-diaminopimelate to diaminopimelate and acetate. This is N-acetyldiaminopimelate deacetylase from Bacillus cereus (strain 03BB102).